Here is a 503-residue protein sequence, read N- to C-terminus: Annexin A11 (503 aa).

Composition is skewed to pro residues over residues 1-17 (MSYP…PPAP), 80-145 (GYPP…PYPG), and 155-169 (SPVP…PSYP). 2 disordered regions span residues 1–35 (MSYP…MPPI) and 56–178 (AANM…GTVT). Annexin repeat units follow at residues 198–269 (FDPL…ALMK), 270–341 (TPIL…SLSQ), 353–425 (SLVQ…AVVK), and 429–500 (NTPA…KICG). 2 positions are modified to N6-acetyllysine: Lys246 and Lys253. The residue at position 477 (Lys477) is an N6-acetyllysine.

It belongs to the annexin family. Interacts with PDCD6 in a calcium-dependent manner. Interacts with KIF23 during cytokinesis. Interacts with S100A6.

Its subcellular location is the cytoplasm. It localises to the melanosome. It is found in the nucleus envelope. The protein localises to the nucleus. The protein resides in the nucleoplasm. Its subcellular location is the cytoskeleton. It localises to the spindle. Required for midbody formation and completion of the terminal phase of cytokinesis. Binds specifically to calcyclin in a calcium-dependent manner. The sequence is that of Annexin A11 (ANXA11) from Oryctolagus cuniculus (Rabbit).